A 353-amino-acid chain; its full sequence is UPF0283 membrane protein YcjF (353 aa).

Residues 1 to 69 (MTEPLKPRID…LRPKRSLWRK (69 aa)) are Periplasmic-facing. Residues 70-90 (MVMGGLALFGASVVGQGVQWT) form a helical membrane-spanning segment. Residues 91–99 (MNAWQTQDW) lie on the Cytoplasmic side of the membrane. Residues 100-120 (VALGGCAAGALIIGAGVGSVV) traverse the membrane as a helical segment. Over 121 to 212 (TEWRRLWRLR…ARREISRSAA (92 aa)) the chain is Periplasmic. The chain crosses the membrane as a helical span at residues 213–233 (ESTLMIAVSPLALVDMAFIAW). The Cytoplasmic portion of the chain corresponds to 234-353 (RNLRLINRIA…LQKGKTPSEK (120 aa)).

This sequence belongs to the UPF0283 family.

It localises to the cell inner membrane. The protein is UPF0283 membrane protein YcjF (ycjF) of Escherichia coli O157:H7.